A 652-amino-acid polypeptide reads, in one-letter code: Apicoplast pyruvate carrier 2 (652 aa).

At 1 to 45 the chain is on the cytoplasmic side; that stretch reads MSAFPASPQPSAFPASPQPSAFPASPQPSASPVSPRHCVSPSSGT. A disordered region spans residues 1–53; the sequence is MSAFPASPQPSAFPASPQPSAFPASPQPSASPVSPRHCVSPSSGTLPSSSSPS. Helical transmembrane passes span 46-66, 126-146, 167-187, 189-209, 212-232, 278-298, 345-365, 385-405, 417-437, 445-465, 467-487, and 515-535; these read LPSS…SSSS, NLLP…AVSY, GTTL…SAWM, LGLA…IAYG, TALG…KLSP, LPYL…SSLN, LVDP…AERQ, SCSA…ICSS, LSWQ…LYPE, AAPA…PRAL, SASR…SLTG, and LWGY…MNAL. Residues 536 to 652 are Cytoplasmic-facing; that stretch reads TAPCLFALST…LPYRFPTYSP (117 aa).

This sequence belongs to the major facilitator superfamily. As to quaternary structure, interacts with apicoplast pyruvate carrier 1.

Its subcellular location is the plastid. The protein resides in the apicoplast. It is found in the membrane. Functionally, along with apicoplast pyruvate carrier 1, forms apicoplast pyruvate carrier (APC) complex, which transports pyruvate into the apicoplast and may also transport amino acids like methionine, serine, glycine and tryptophan with low efficiency. Required for maintaining pyruvate-dependent metabolic activities in the apicoplast, such as synthesis of fatty acids, isopentenyl pyrophosphate (IPP), dimethylallyl pyrophosphate (DMAPP) and methylerythritol 4-phosphate (MEP). Required for maintaining the integrity of the apicoplast. Required for normal parasite growth. The protein is Apicoplast pyruvate carrier 2 of Toxoplasma gondii.